Reading from the N-terminus, the 357-residue chain is UDP-arabinopyranose mutase 1 (357 aa).

Val-2 carries the N-acetylvaline modification. A DXD motif motif is present at residues 110-112; sequence DDD. The N-linked (Glc...) arginine glycan is linked to Arg-158.

The protein belongs to the RGP family. Heteromers with RGP2, RGP3, RGP4 and RGP5. The cofactor is Mn(2+). Requires Mg(2+) as cofactor. In terms of processing, reversibly glycosylated in vitro by UDP-glucose, UDP-xylose and UDP-galactose, but not UDP-mannose. Predominantly expressed in shoot and root apical meristems. Expressed in epidermal cells of leaves, inflorescence stems and seed coat. Expressed in pollen.

Its subcellular location is the cytoplasm. The protein resides in the cytosol. It is found in the golgi apparatus. It carries out the reaction UDP-beta-L-arabinofuranose = UDP-beta-L-arabinopyranose. UDP-L-arabinose mutase involved in the biosynthesis of cell wall non-cellulosic polysaccharides. Catalyzes the interconvertion of UDP-L-arabinopyranose (UDP-Arap) and UDP-L-arabinofuranose (UDP-Araf) in vitro. Preferentially catalyzes the formation of UDP-Arap from UDP-Araf. At thermodynamic equilibrium in vitro the ratio of the pyranose form over the furanose form is 95:5. Is not active on other UDP-sugars (UDP-Gal, UDP-Xyl, UDP-Glc, GDP-Man and GDP-Fuc). Functions redundantly with RGP2 and is essential for proper cell walls and pollen development. Probably involved in the formation of the pectocellulosic cell wall layer intine. Is probably active as heteromer in vivo. The protein is UDP-arabinopyranose mutase 1 of Arabidopsis thaliana (Mouse-ear cress).